Here is a 1577-residue protein sequence, read N- to C-terminus: Dynamin-binding protein (1577 aa).

Met1 is modified (N-acetylmethionine). SH3 domains follow at residues 2–61 (EAGS…IVTI), 66–126 (EGER…ELCL), 145–204 (YSMG…LLGP), and 243–302 (EPGT…LCPD). 2 disordered regions span residues 211–244 (SVSS…EEEP) and 335–395 (EEQR…WEMP). Positions 230–244 (VGEEEIGPDEDEEEP) are enriched in acidic residues. Over residues 335 to 344 (EEQRHETSDH) the composition is skewed to basic and acidic residues. Position 496 is a phosphoserine (Ser496). Disordered stretches follow at residues 591-624 (GSSK…TSPH) and 639-659 (VRPS…NAVS). The segment covering 639 to 649 (VRPSRPAPLPP) has biased composition (pro residues). Residue Ser684 is modified to Phosphoserine. Residues 693–757 (LVLVRIEEME…ELQQLREMTL (65 aa)) adopt a coiled-coil conformation. The DH domain maps to 784-967 (KRAKVIEELL…KEINVNINEY (184 aa)). One can recognise a BAR domain in the interval 1008–1217 (LKHLTGFAPQ…LKVAGREGNL (210 aa)). Residues 1136 to 1173 (ERAEKLKDKKTLEELQSARNNYEALNAQLLDELPKFHQ) are a coiled coil. In terms of domain architecture, SH3 5 spans 1285–1348 (PPEKLFQAER…YSSFLKPYNP (64 aa)). Residues 1348-1487 (PRRSHSDASV…SVPGRNGQSQ (140 aa)) form a disordered region. A compositionally biased stretch (polar residues) spans 1376-1405 (RQNSGSTLTFNPSSMAVSFTSGSCQKQPQD). The span at 1419-1442 (SASLNPSNSESSPSRCPSDPDSTS) shows a compositional bias: low complexity. One can recognise an SH3 6 domain in the interval 1513–1576 (EGNQVYFAVY…PSNYIRKTEY (64 aa)).

In terms of assembly, binds DNM1 via its N-terminal SH3 domains. The C-terminal SH3 domain binds a complex containing actin, tubulin, Hsp70 and actin-regulatory proteins, such as ENAH, EVL, WIRE, CR16, WAVE1 and NAP1L1. Interacts with FASLG. Interacts (via SH3 domain 6) with WASL. Interacts (via SH3 domain 6) interacts with ENAH. Interacts (via C-terminal domain) with TJP1; required for the apical cell-cell junction localization of DNMBP. As to quaternary structure, (Microbial infection) Interacts (via SH3 domain 6) with L.monocytogenes InlC. In terms of tissue distribution, detected in heart, brain, lung, liver, skeletal muscle, kidney and pancreas.

The protein resides in the cytoplasm. Its subcellular location is the golgi apparatus. The protein localises to the golgi stack. It localises to the cytoskeleton. It is found in the synapse. The protein resides in the cell junction. In terms of biological role, plays a critical role as a guanine nucleotide exchange factor (GEF) for CDC42 in several intracellular processes associated with the actin and microtubule cytoskeleton. Regulates the structure of apical junctions through F-actin organization in epithelial cells. Participates in the normal lumenogenesis of epithelial cell cysts by regulating spindle orientation. Plays a role in ciliogenesis. May play a role in membrane trafficking between the cell surface and the Golgi. This is Dynamin-binding protein from Homo sapiens (Human).